The following is a 148-amino-acid chain: Large ribosomal subunit protein bL9 (148 aa).

Belongs to the bacterial ribosomal protein bL9 family.

Binds to the 23S rRNA. The chain is Large ribosomal subunit protein bL9 from Geobacter sulfurreducens (strain ATCC 51573 / DSM 12127 / PCA).